We begin with the raw amino-acid sequence, 968 residues long: Isoleucine--tRNA ligase (968 aa).

A 'HIGH' region motif is present at residues 68–78 (PYANGALHMGH). Glutamate 582 is an L-isoleucyl-5'-AMP binding site. A 'KMSKS' region motif is present at residues 623–627 (KMSKS). ATP is bound at residue lysine 626. Zn(2+) contacts are provided by cysteine 936, cysteine 939, cysteine 956, and cysteine 959.

The protein belongs to the class-I aminoacyl-tRNA synthetase family. IleS type 1 subfamily. As to quaternary structure, monomer. Zn(2+) is required as a cofactor.

It is found in the cytoplasm. It catalyses the reaction tRNA(Ile) + L-isoleucine + ATP = L-isoleucyl-tRNA(Ile) + AMP + diphosphate. Its function is as follows. Catalyzes the attachment of isoleucine to tRNA(Ile). As IleRS can inadvertently accommodate and process structurally similar amino acids such as valine, to avoid such errors it has two additional distinct tRNA(Ile)-dependent editing activities. One activity is designated as 'pretransfer' editing and involves the hydrolysis of activated Val-AMP. The other activity is designated 'posttransfer' editing and involves deacylation of mischarged Val-tRNA(Ile). This is Isoleucine--tRNA ligase from Prochlorococcus marinus (strain AS9601).